Consider the following 1024-residue polypeptide: Protein translocase subunit SecA (1024 aa).

Residues Gln143, 161–165, and Asp661 each bind ATP; that span reads GEGKT. Positions 970 to 1024 are disordered; the sequence is HKAAESVYTASSDEPETNQEESPQQPAIAEKKPGRNDLCPCGSGKKYKNCHGQQP. Positions 1008, 1010, 1019, and 1020 each coordinate Zn(2+).

This sequence belongs to the SecA family. As to quaternary structure, monomer and homodimer. Part of the essential Sec protein translocation apparatus which comprises SecA, SecYEG and auxiliary proteins SecDF. Other proteins may also be involved. Zn(2+) serves as cofactor.

It localises to the cell inner membrane. The protein localises to the cytoplasm. The enzyme catalyses ATP + H2O + cellular proteinSide 1 = ADP + phosphate + cellular proteinSide 2.. Part of the Sec protein translocase complex. Interacts with the SecYEG preprotein conducting channel. Has a central role in coupling the hydrolysis of ATP to the transfer of proteins into and across the cell membrane, serving as an ATP-driven molecular motor driving the stepwise translocation of polypeptide chains across the membrane. The polypeptide is Protein translocase subunit SecA (Pelodictyon phaeoclathratiforme (strain DSM 5477 / BU-1)).